A 917-amino-acid polypeptide reads, in one-letter code: Isoleucine--tRNA ligase (917 aa).

The L-isoleucyl-5'-AMP site is built by P56, H67, E554, G555, D557, Q558, and H585. Residues 57-67 carry the 'HIGH' region motif; it reads PYANGNLHMGH. Positions 595-599 match the 'KMSKS' region motif; the sequence is KMSKS. K598 lines the ATP pocket. Positions 632 and 640 each coordinate tRNA(Ile). Zn(2+) contacts are provided by C886, C889, C906, and C909.

It belongs to the class-I aminoacyl-tRNA synthetase family. IleS type 1 subfamily. In terms of assembly, monomer. Zn(2+) is required as a cofactor.

The protein localises to the cytoplasm. The catalysed reaction is tRNA(Ile) + L-isoleucine + ATP = L-isoleucyl-tRNA(Ile) + AMP + diphosphate. Functionally, catalyzes the attachment of isoleucine to tRNA(Ile). As IleRS can inadvertently accommodate and process structurally similar amino acids such as valine, to avoid such errors it has two additional distinct tRNA(Ile)-dependent editing activities. One activity is designated as 'pretransfer' editing and involves the hydrolysis of activated Val-AMP. The other activity is designated 'posttransfer' editing and involves deacylation of mischarged Val-tRNA(Ile). This chain is Isoleucine--tRNA ligase (ileS), found in Staphylococcus aureus.